Consider the following 139-residue polypeptide: MHEWALADAIVRTVLDYAQREGAKRVKAVRVVLGELQDVAEDIVKFAMEQMFAGTIAEGAEIIFEEEEAVFKCRNCGHTWKLKEVKDRFDERIKEDIHFIPEVVHAFLACPKCGSHDFEVVQGRGVYVAGIMIEKEGEA.

Histidine 2 serves as a coordination point for Ni(2+). Zn(2+) is bound by residues cysteine 73, cysteine 76, cysteine 110, and cysteine 113.

This sequence belongs to the HypA/HybF family.

Involved in the maturation of [NiFe] hydrogenases. Required for nickel insertion into the metal center of the hydrogenase. This chain is Hydrogenase maturation factor HypA, found in Thermococcus gammatolerans (strain DSM 15229 / JCM 11827 / EJ3).